A 314-amino-acid polypeptide reads, in one-letter code: Dihydroorotate dehydrogenase (fumarate) (314 aa).

Residues lysine 46, 70–74 (NSMGL), and asparagine 130 contribute to the substrate site. 46–47 (KS) contacts FMN. Asparagine 130 lines the FMN pocket. Catalysis depends on nucleophile residues serine 132 and cysteine 133. FMN is bound by residues lysine 167 and isoleucine 195. Residue 196–197 (NS) participates in substrate binding. FMN is bound by residues glycine 224, 252 to 253 (GG), and 274 to 275 (GT).

This sequence belongs to the dihydroorotate dehydrogenase family. Type 1 subfamily. As to quaternary structure, homodimer. The cofactor is FMN.

It is found in the cytoplasm. It carries out the reaction (S)-dihydroorotate + fumarate = orotate + succinate. Its pathway is pyrimidine metabolism; UMP biosynthesis via de novo pathway. Functionally, catalyzes the conversion of dihydroorotate to orotate with fumarate as the electron acceptor. The chain is Dihydroorotate dehydrogenase (fumarate) (URA1) from Saccharomyces paradoxus (Yeast).